The sequence spans 296 residues: Phosphatidylglycerol--prolipoprotein diacylglyceryl transferase (296 aa).

The next 7 helical transmembrane spans lie at 17 to 37, 59 to 79, 97 to 117, 129 to 149, 203 to 223, 230 to 250, and 265 to 285; these read LAVRWYGLMYLVGFIAAIVVG, MMFYGVLGTVLGGRLGYVLFY, GGMSFHGGFLGVTLAMVLFAW, FVAPMVPAGLAAGRLGNFING, PSQLYEIALEGIALFFVLFFF, LGAVSALFLIGYGLARFTVEF, and LSMGQWLSLPMILAGIALLVW. Arg142 contacts a 1,2-diacyl-sn-glycero-3-phospho-(1'-sn-glycerol).

It belongs to the Lgt family.

The protein resides in the cell inner membrane. It catalyses the reaction L-cysteinyl-[prolipoprotein] + a 1,2-diacyl-sn-glycero-3-phospho-(1'-sn-glycerol) = an S-1,2-diacyl-sn-glyceryl-L-cysteinyl-[prolipoprotein] + sn-glycerol 1-phosphate + H(+). It functions in the pathway protein modification; lipoprotein biosynthesis (diacylglyceryl transfer). Its function is as follows. Catalyzes the transfer of the diacylglyceryl group from phosphatidylglycerol to the sulfhydryl group of the N-terminal cysteine of a prolipoprotein, the first step in the formation of mature lipoproteins. The sequence is that of Phosphatidylglycerol--prolipoprotein diacylglyceryl transferase from Burkholderia ambifaria (strain MC40-6).